The following is a 464-amino-acid chain: Argininosuccinate lyase (464 aa).

The protein belongs to the lyase 1 family. Argininosuccinate lyase subfamily.

It is found in the cytoplasm. It catalyses the reaction 2-(N(omega)-L-arginino)succinate = fumarate + L-arginine. It functions in the pathway amino-acid biosynthesis; L-arginine biosynthesis; L-arginine from L-ornithine and carbamoyl phosphate: step 3/3. The polypeptide is Argininosuccinate lyase (Pseudomonas aeruginosa (strain LESB58)).